The primary structure comprises 704 residues: MGERARSPDIEQGKKGGKHPYSHYSSDLGSSPQSSGPSSPVNTTPCASTREKNPKRHLSDNQVHHPTVRKVSPKAVPSKKGIRVGFRSQSLNREPLRKDPDIVTKRVLSARLLKINELQNEVSELQVKLAQLLKENKALKSLQYRQEKALNKFEDAENEISQLIHRHNNEITALKERLRKSQEKERATEKRVKETEGELFRTKFSLQKLKKISEARHLPERDDLAKKLVSAELKLDDTERKIKELSKNLELSTNSFQRQLLAERKRAFEAYDENKVLQKELQRLHHKLKEKEKELDIKNIYANRLPKSSPKKEKEIERKHVSCQSDFTDQCTKGVQTAEDFELEDFPFTAQTVLCYENRWDEPEYLSSYLEYQDLNKHGSEMLSSVLGQEGKYDEDEDPCSAKQEARKPESEWAREELDKVKGKSALLGRAEKLALEAGRFPTENYQAQSVDKFEDEAERLKTEMLLAKLNEINKELQDPQNLGRAPLPLLPNFESKLHSPDRSTRPYSFPESLDRSFNGQHLQDLSFLTPRGEGGSPGPIRSPGQIRSPAPLDEFSFGSYVPSFGKTLGKSNPPSQKSSLLDFQSNSSESPSKDSLDLMSRKEKKATLMEQLFGPSASNTSVSSKSTDPHFPAASRGDMDPLHFLSGDRNSRVREPGDEEEDLFLREGRSFNPNRHRLKHASNKPTVTAVDSVDEDIEEVTLR.

Over residues 1-14 (MGERARSPDIEQGK) the composition is skewed to basic and acidic residues. The tract at residues 1–80 (MGERARSPDI…VSPKAVPSKK (80 aa)) is disordered. Serine 7 carries the post-translational modification Phosphoserine. Low complexity predominate over residues 25 to 40 (SSDLGSSPQSSGPSSP). At serine 48 the chain carries Phosphoserine. Residues 49 to 63 (TREKNPKRHLSDNQV) show a composition bias toward basic and acidic residues. Positions 105–300 (KRVLSARLLK…KEKELDIKNI (196 aa)) form a coiled coil. Disordered stretches follow at residues 389-417 (QEGK…AREE) and 476-661 (ELQD…GDEE). Residues 404–417 (QEARKPESEWAREE) show a composition bias toward basic and acidic residues. The stretch at 448 to 479 (AQSVDKFEDEAERLKTEMLLAKLNEINKELQD) forms a coiled coil. The segment covering 496 to 505 (SKLHSPDRST) has biased composition (basic and acidic residues). The segment covering 570-591 (GKSNPPSQKSSLLDFQSNSSES) has biased composition (polar residues). The span at 592–608 (PSKDSLDLMSRKEKKAT) shows a compositional bias: basic and acidic residues. Over residues 617–627 (SASNTSVSSKS) the composition is skewed to low complexity.

It belongs to the LCA5 family. In terms of assembly, interacts with NINL. Interacts with OFD1. Interacts with FAM161A. Interacts with components of the IFT complex B. As to expression, detected in several tissues.

It localises to the cytoplasm. It is found in the cytoskeleton. The protein localises to the cilium axoneme. Its subcellular location is the cilium basal body. The protein resides in the cell projection. It localises to the cilium. Involved in intraflagellar protein (IFT) transport in photoreceptor cilia. This is Lebercilin (Lca5) from Mus musculus (Mouse).